Reading from the N-terminus, the 206-residue chain is Ribosomal RNA small subunit methyltransferase G (206 aa).

Residues Gly-73, Leu-78, 124-125 (VE), and Arg-139 contribute to the S-adenosyl-L-methionine site.

This sequence belongs to the methyltransferase superfamily. RNA methyltransferase RsmG family.

It is found in the cytoplasm. The catalysed reaction is guanosine(527) in 16S rRNA + S-adenosyl-L-methionine = N(7)-methylguanosine(527) in 16S rRNA + S-adenosyl-L-homocysteine. In terms of biological role, specifically methylates the N7 position of guanine in position 527 of 16S rRNA. This is Ribosomal RNA small subunit methyltransferase G from Yersinia pseudotuberculosis serotype O:3 (strain YPIII).